We begin with the raw amino-acid sequence, 113 residues long: Cell division protein FtsB (113 aa).

At 1 to 3 (MRL) the chain is on the cytoplasmic side. Residues 4 to 21 (ISLLLFVLLLAIQYPLWL) form a helical membrane-spanning segment. Residues 22–113 (GKGGWLRVWD…PNSVAGRGGH (92 aa)) lie on the Periplasmic side of the membrane. Positions 34 to 64 (RQVNEQTVHNQALKLRNAKLEGEVKDLQDGT) form a coiled coil. The interval 93–113 (KVSATPPLPPPPNSVAGRGGH) is disordered.

The protein belongs to the FtsB family. Part of a complex composed of FtsB, FtsL and FtsQ.

The protein resides in the cell inner membrane. Functionally, essential cell division protein. May link together the upstream cell division proteins, which are predominantly cytoplasmic, with the downstream cell division proteins, which are predominantly periplasmic. This is Cell division protein FtsB from Cupriavidus metallidurans (strain ATCC 43123 / DSM 2839 / NBRC 102507 / CH34) (Ralstonia metallidurans).